The sequence spans 618 residues: Proline--tRNA ligase (618 aa).

The protein belongs to the class-II aminoacyl-tRNA synthetase family. ProS type 1 subfamily. As to quaternary structure, homodimer.

The protein resides in the cytoplasm. It catalyses the reaction tRNA(Pro) + L-proline + ATP = L-prolyl-tRNA(Pro) + AMP + diphosphate. In terms of biological role, catalyzes the attachment of proline to tRNA(Pro) in a two-step reaction: proline is first activated by ATP to form Pro-AMP and then transferred to the acceptor end of tRNA(Pro). As ProRS can inadvertently accommodate and process non-cognate amino acids such as alanine and cysteine, to avoid such errors it has two additional distinct editing activities against alanine. One activity is designated as 'pretransfer' editing and involves the tRNA(Pro)-independent hydrolysis of activated Ala-AMP. The other activity is designated 'posttransfer' editing and involves deacylation of mischarged Ala-tRNA(Pro). The misacylated Cys-tRNA(Pro) is not edited by ProRS. The polypeptide is Proline--tRNA ligase (Streptococcus equi subsp. equi (strain 4047)).